Consider the following 845-residue polypeptide: MTESKNDTKSWAPKQIWIKDVLKKSGTELLDISKSPAKAVAVKKSPAKDSATTKMVYYSANQLLIKTEQSSQAQFCLQVPPPLTATTTSVGLGVPPSGGQQEHFELLQTPQQRQMQLQLQDQHQQEQQQFVSYQLAIQQHQKQQQQQQHESITNAAPTAAPSAQRIKTEPVGGFPASAAVVSQVRKPSASKPQFKCDQCGMTFGSKSAHTSHTKSHSKNQDLSLNGASGAGVAAPVSTAAIELNDAGLPVGIPKSPTIKPLANVAAGADPYQCNVCQKTFAVPARLIRHYRTHTGERPFECEFCHKLFSVKENLQVHRRIHTKERPYKCDVCGRAFEHSGKLHRHMRIHTGERPHKCSVCEKTFIQSGQLVIHMRTHTGEKPYKCPEPGCGKGFTCSKQLKVHSRTHTGEKPYHCDICFRDFGYNHVLKLHRVQHYGSKCYKCTICDETFKNKKEMEAHIKGHANEVPDDEAEAAAASAAASTSAGSSAGSPSLQGVSSNSESSNHSPPSSPPATKKPRQARQPRVSKTVAATLSIPTSSPLSPSSLSSTYSPSASSMASPPPTSAHYLPVQMEADALSRDSGVSSAQPAHSTYADEEPTDLSMQQVQGQLPESTVDYYQAPPSLLELQPQPAGLTINPALLEAASIARRHDDNDDQVQDEDVHAAAWQMMQLCRGHGSLPPTEQPAPSHQPQVPTLHVSDLAANYDDTHEATVLIEHFKRGDLARHGLHKGYAPVPKYESALPNPDVVRRVEAAIGLRSSTESPERSSSPESDSLMMADRNVMTLPLRKRKHYMNKGDDGQVDSEKASGDGTSAAGGAASVGAGDGPGSKVMRMSSVIQFAKAS.

A disordered region spans residues 141–164; sequence QKQQQQQQHESITNAAPTAAPSAQ. 8 consecutive C2H2-type zinc fingers follow at residues 194-216, 271-293, 299-321, 327-349, 355-377, 383-407, 413-435, and 441-463; these read FKCD…TKSH, YQCN…YRTH, FECE…RRIH, YKCD…MRIH, HKCS…MRTH, YKCP…SRTH, YHCD…RVQH, and YKCT…IKGH. Disordered stretches follow at residues 469 to 610 and 757 to 845; these read DDEA…VQGQ and GLRS…AKAS. Low complexity-rich tracts occupy residues 474 to 491, 498 to 508, and 532 to 559; these read AAAA…SAGS, SSNSESSNHSP, and ATLS…SSMA. Positions 582–591 are enriched in polar residues; sequence SGVSSAQPAH. Residues 759–775 show a composition bias toward low complexity; that stretch reads RSSTESPERSSSPESDS. The span at 796 to 809 shows a compositional bias: basic and acidic residues; that stretch reads NKGDDGQVDSEKAS. Positions 810 to 823 are enriched in low complexity; that stretch reads GDGTSAAGGAASVG.

It belongs to the krueppel C2H2-type zinc-finger protein family.

Its function is as follows. Plays a general role in the hierarchies of gene expression leading to metamorphosis. The chain is Krueppel homolog 1 (Kr-h1) from Drosophila melanogaster (Fruit fly).